Reading from the N-terminus, the 398-residue chain is Putative L-rhamnonate dehydratase (398 aa).

Substrate-binding residues include H29 and R55. D221, E247, and E274 together coordinate Mg(2+). H324 functions as the Proton acceptor in the catalytic mechanism. E344 contributes to the substrate binding site.

It belongs to the mandelate racemase/muconate lactonizing enzyme family. RhamD subfamily. Mg(2+) serves as cofactor.

The catalysed reaction is L-rhamnonate = 2-dehydro-3-deoxy-L-rhamnonate + H2O. Functionally, catalyzes the dehydration of L-rhamnonate to 2-keto-3-deoxy-L-rhamnonate (KDR). The polypeptide is Putative L-rhamnonate dehydratase (Caldivirga maquilingensis (strain ATCC 700844 / DSM 13496 / JCM 10307 / IC-167)).